Reading from the N-terminus, the 274-residue chain is Thiazole synthase (274 aa).

The active-site Schiff-base intermediate with DXP is the lysine 115. Residues glycine 176, 202 to 203, and 224 to 225 contribute to the 1-deoxy-D-xylulose 5-phosphate site; these read AG and NS.

Belongs to the ThiG family. In terms of assembly, homotetramer. Forms heterodimers with either ThiH or ThiS.

The protein localises to the cytoplasm. The enzyme catalyses [ThiS sulfur-carrier protein]-C-terminal-Gly-aminoethanethioate + 2-iminoacetate + 1-deoxy-D-xylulose 5-phosphate = [ThiS sulfur-carrier protein]-C-terminal Gly-Gly + 2-[(2R,5Z)-2-carboxy-4-methylthiazol-5(2H)-ylidene]ethyl phosphate + 2 H2O + H(+). Its pathway is cofactor biosynthesis; thiamine diphosphate biosynthesis. Functionally, catalyzes the rearrangement of 1-deoxy-D-xylulose 5-phosphate (DXP) to produce the thiazole phosphate moiety of thiamine. Sulfur is provided by the thiocarboxylate moiety of the carrier protein ThiS. In vitro, sulfur can be provided by H(2)S. This Psychrobacter arcticus (strain DSM 17307 / VKM B-2377 / 273-4) protein is Thiazole synthase.